The following is a 200-amino-acid chain: Probable GTP-binding protein EngB (200 aa).

One can recognise an EngB-type G domain in the interval 26–200; that stretch reads SIPEIAIAGR…IYEIAQCIKK (175 aa). Residues 34-41, 61-65, 80-83, 147-150, and 176-179 each bind GTP; these read GRSNVGKS, GCTKQ, DLPG, TKID, and VISA. Positions 41 and 63 each coordinate Mg(2+).

It belongs to the TRAFAC class TrmE-Era-EngA-EngB-Septin-like GTPase superfamily. EngB GTPase family. The cofactor is Mg(2+).

Functionally, necessary for normal cell division and for the maintenance of normal septation. This Ehrlichia canis (strain Jake) protein is Probable GTP-binding protein EngB.